Consider the following 186-residue polypeptide: ADP-ribosylation factor-like protein 6 (186 aa).

Residue Gly2 is the site of N-myristoyl glycine attachment. Residues 24–31, Thr50, 69–73, Gly72, 130–133, and Ala164 contribute to the GTP site; these read GLDNSGKT, DMSGQ, and NKMD. Positions 31 and 50 each coordinate Mg(2+).

It belongs to the small GTPase superfamily. Arf family. Interacts with SEC61B, ARL6IP1, ARL6IP2, ARL6IP3, ARL6IP4 ARL6IP5 and ARL6IP6. Interacts (GTP-bound form) with the BBSome a complex that contains BBS1, BBS2, BBS4, BBS5, BBS7, BBS8/TTC8, BBS9 and BBIP10. Interacts (GTP-free form) with IFT27.

The protein localises to the cell projection. It localises to the cilium membrane. Its subcellular location is the cytoplasm. The protein resides in the cytoskeleton. It is found in the cilium axoneme. The protein localises to the cilium basal body. Functionally, involved in membrane protein trafficking at the base of the ciliary organelle. Mediates recruitment onto plasma membrane of the BBSome complex which would constitute a coat complex required for sorting of specific membrane proteins to the primary cilia. Together with BBS1, is necessary for correct trafficking of PKD1 to primary cilia. Together with the BBSome complex and LTZL1, controls SMO ciliary trafficking and contributes to the sonic hedgehog (SHH) pathway regulation. May regulate cilia assembly and disassembly and subsequent ciliary signaling events such as the Wnt signaling cascade. Isoform 2 may be required for proper retinal function and organization. This is ADP-ribosylation factor-like protein 6 (ARL6) from Homo sapiens (Human).